Here is a 504-residue protein sequence, read N- to C-terminus: Maturase K (504 aa).

The protein belongs to the intron maturase 2 family. MatK subfamily.

It localises to the plastid. It is found in the chloroplast. Functionally, usually encoded in the trnK tRNA gene intron. Probably assists in splicing its own and other chloroplast group II introns. The chain is Maturase K from Guizotia abyssinica (Niger).